The following is a 461-amino-acid chain: MSPILTNRQAEELHKSIIAYLTANNLLNTANTLRAELNLSENAFDTATAKKYETLLEKKWTSVVRLQKKIMDLESRMSALQTELDNATPISLAKRNKDPASWIPTAPARHALESHRDTINSVAFHPIFSSIASGSDDCTIKIWDWELGELERTIKGHTRAVVDVDFGGPRGGILLASCSSDLSIKLWDPANEYKNIRTLLGHDHSVSAVRFIPLGASGAPSSGNLLVSASRDKSLKIWDVNTGYCVRTLQGHTAWVRDVYPSPDGRFLLSTGDDSTARLWDISVSNPESKVTMFGHDHFNECCALAPSSSYQYLSPLTGLKKPPAASSTAEFMATGSRDKTIKLWDARGTCLMTLVGHDNWIRALAFHPGGKYLFSVSDDRTLRCWDLSQEGKCIKVMRDAHERFITCLRWAPSIFKDTPTGHGAGDGRNGDSKKTEGPDVQIRCVIATGGVDMKLRIFAN.

One can recognise a LisH domain in the interval 9–41; that stretch reads QAEELHKSIIAYLTANNLLNTANTLRAELNLSE. WD repeat units follow at residues 114–155, 157–197, 201–248, 251–290, 312–355, 357–396, and 401–457; these read SHRD…RTIK, HTRA…KNIR, GHDH…CVRT, GHTA…PESK, QYLS…LMTL, GHDN…KCIK, and AHER…MKLR.

The protein belongs to the WD repeat LIS1/nudF family. In terms of assembly, self-associates. Interacts with NDL1 and dynein.

The protein resides in the cytoplasm. The protein localises to the cytoskeleton. It localises to the spindle pole. Functionally, positively regulates the activity of the minus-end directed microtubule motor protein dynein. May enhance dynein-mediated microtubule sliding by targeting dynein to the microtubule plus end. Required for nuclear migration during vegetative growth as well as development. Required for retrograde early endosome (EE) transport from the hyphal tip. Required for localization of dynein to the mitotic spindle poles. Recruits additional proteins to the dynein complex at SPBs. The polypeptide is Nuclear distribution protein PAC1 (Arthroderma otae (strain ATCC MYA-4605 / CBS 113480) (Microsporum canis)).